Reading from the N-terminus, the 141-residue chain is Ribosomal RNA large subunit methyltransferase H (141 aa).

Residue Gly-88 coordinates S-adenosyl-L-methionine.

Belongs to the RNA methyltransferase RlmH family. Homodimer.

Its subcellular location is the cytoplasm. It catalyses the reaction pseudouridine(1915) in 23S rRNA + S-adenosyl-L-methionine = N(3)-methylpseudouridine(1915) in 23S rRNA + S-adenosyl-L-homocysteine + H(+). In terms of biological role, specifically methylates the pseudouridine at position 1915 (m3Psi1915) in 23S rRNA. This chain is Ribosomal RNA large subunit methyltransferase H, found in Novosphingobium aromaticivorans (strain ATCC 700278 / DSM 12444 / CCUG 56034 / CIP 105152 / NBRC 16084 / F199).